We begin with the raw amino-acid sequence, 372 residues long: GTPase Obg (372 aa).

In terms of domain architecture, Obg spans 1 to 159 (MKFIDEARIE…RMLKLELKVL (159 aa)). The segment at 128-147 (LHFKSSTNRAPRQKTDGKPG) is disordered. One can recognise an OBG-type G domain in the interval 160–334 (ADVGLLGMPN…LVYAIHDYLV (175 aa)). GTP contacts are provided by residues 166–173 (GMPNAGKS), 191–195 (FTTLA), 213–216 (DIPG), 284–287 (NKLD), and 315–317 (SAL). Serine 173 and threonine 193 together coordinate Mg(2+).

This sequence belongs to the TRAFAC class OBG-HflX-like GTPase superfamily. OBG GTPase family. As to quaternary structure, monomer. Mg(2+) serves as cofactor.

The protein localises to the cytoplasm. Functionally, an essential GTPase which binds GTP, GDP and possibly (p)ppGpp with moderate affinity, with high nucleotide exchange rates and a fairly low GTP hydrolysis rate. Plays a role in control of the cell cycle, stress response, ribosome biogenesis and in those bacteria that undergo differentiation, in morphogenesis control. This Burkholderia mallei (strain NCTC 10247) protein is GTPase Obg.